Here is a 474-residue protein sequence, read N- to C-terminus: uncharacterized protein (474 aa).

The next 10 membrane-spanning stretches (helical) occupy residues Ile-17 to Tyr-39, Phe-44 to Leu-61, Leu-81 to Tyr-103, Gly-144 to Tyr-166, Ile-186 to Phe-208, Ile-239 to His-256, Ile-268 to Ile-286, Leu-319 to Val-341, Ala-385 to Gly-407, and Ile-444 to Phe-466.

This sequence belongs to the TrkH potassium transport family.

It is found in the cell membrane. This is an uncharacterized protein from Methanocaldococcus jannaschii (strain ATCC 43067 / DSM 2661 / JAL-1 / JCM 10045 / NBRC 100440) (Methanococcus jannaschii).